The primary structure comprises 803 residues: Zinc finger and BTB domain-containing protein 17 (803 aa).

Residues 1-104 (MDFPQHSQHV…VATFLQMQDI (104 aa)) form the BTB domain. Residues 116–295 (EPATSPGGNA…GLRSGTYGDR (180 aa)) are disordered. Serine 120 carries the phosphoserine modification. Basic and acidic residues predominate over residues 132–142 (GGDKRAKEEKV). 2 stretches are compositionally biased toward low complexity: residues 171–180 (GQAQSAASGA) and 206–217 (AAAEAEAALSES). Acidic residues-rich tracts occupy residues 233–244 (EQKEQEEQEEEG) and 261–272 (EAPEENENEESA). Positions 269–308 (EESAGTDSGQELGSEARGLRSGTYGDRTESKAYGSVIHKC) are interaction with MYC. 13 consecutive C2H2-type zinc fingers follow at residues 306–328 (HKCE…IRIH), 334–356 (FSCR…EKTH), 362–384 (YGCE…KKRH), 390–412 (YRCE…QLVH), 418–440 (YQCD…LETH), 446–468 (HKCP…LKIH), 474–496 (LKCR…LRIH), 502–524 (YVCI…VRIH), 530–552 (CQCV…VRQH), 558–580 (YVCE…IRHH), 586–608 (HKCS…IIIH), 614–637 (YLCD…KTVH), and 717–739 (YACD…VRIH). Lysine 397 participates in a covalent cross-link: Glycyl lysine isopeptide (Lys-Gly) (interchain with G-Cter in ubiquitin). A Glycyl lysine isopeptide (Lys-Gly) (interchain with G-Cter in ubiquitin) cross-link involves residue lysine 481. The tract at residues 637–718 (HQGKAGIKIL…EDPNTHILYA (82 aa)) is interaction with MYC. Residues 637–803 (HQGKAGIKIL…TAPECPPPAE (167 aa)) form an interaction with HCFC1 region. The tract at residues 779 to 803 (RDGAEGQPALAETSPTAPECPPPAE) is disordered.

The protein belongs to the krueppel C2H2-type zinc-finger protein family. In terms of assembly, homooligomerizes (via the BTB/POZ domain), multimerization is required for DNA binding. Interacts (via the C-terminal zinc fingers) with GIF1; the interaction results in the recruitment of MYB to the CDKN1A/p21 and CDKN1B promoters and repression of transcription. Interacts with TRAF2, interfering with the binding of UBC13 to TRAF2, and inhibiting TRAF2 E3 ligase activity. Interacts with MYC (via the C-terminal helix-loop-helix motif); the interaction inhibits ZBTB17 transactivation and growth arrest activities and renders it insoluble in the nucleus. Also interacts with HCFC1, MAGEA4 and TMPRSS11A. Interacts with BCL6; the interaction inhibits ZBTB17 transactivation activity on target genes involved in cell cycle arrest. Interacts with ZBTB49 isoform 3/ZNF509S1; this interaction blocks ZBTB17-mediated repression of RB1. In terms of processing, undergoes 'Lys-48'-linked polyubiquitination at Lys-397 and Lys-481 and subsequent proteasomal degradation in a TRAF2-dependent manner. In terms of tissue distribution, expressed in germinal center B-cells.

Its subcellular location is the nucleus. In terms of biological role, transcription factor that can function as an activator or repressor depending on its binding partners, and by targeting negative regulators of cell cycle progression. Plays a critical role in early lymphocyte development, where it is essential to prevent apoptosis in lymphoid precursors, allowing them to survive in response to IL7 and undergo proper lineage commitment. Has been shown to bind to the promoters of adenovirus major late protein and cyclin D1 and activate transcription. Required for early embryonic development during gastrulation. Represses RB1 transcription; this repression can be blocked by interaction with ZBTB49 isoform 3/ZNF509S1. In Homo sapiens (Human), this protein is Zinc finger and BTB domain-containing protein 17 (ZBTB17).